The chain runs to 482 residues: Glutamate--tRNA ligase 2 (482 aa).

The short motif at 16–26 (PSPTGYLHLGN) is the 'HIGH' region element. Zn(2+) is bound by residues Cys113, Cys115, Cys140, and His142. Residues 257-261 (PLSKR) carry the 'KMSKS' region motif. ATP is bound at residue Lys260.

It belongs to the class-I aminoacyl-tRNA synthetase family. Glutamate--tRNA ligase type 1 subfamily. Monomer. The cofactor is Zn(2+).

The protein resides in the cytoplasm. It catalyses the reaction tRNA(Glu) + L-glutamate + ATP = L-glutamyl-tRNA(Glu) + AMP + diphosphate. In terms of biological role, catalyzes the attachment of glutamate to tRNA(Glu) in a two-step reaction: glutamate is first activated by ATP to form Glu-AMP and then transferred to the acceptor end of tRNA(Glu). The protein is Glutamate--tRNA ligase 2 of Acidithiobacillus ferrooxidans (strain ATCC 53993 / BNL-5-31) (Leptospirillum ferrooxidans (ATCC 53993)).